Consider the following 165-residue polypeptide: Coronafacic acid dehydratase (165 aa).

His62 is an active-site residue.

This sequence belongs to the thioester dehydratase family.

It functions in the pathway phytotoxin biosynthesis; coronatine biosynthesis. The polypeptide is Coronafacic acid dehydratase (cfa2) (Pseudomonas savastanoi pv. glycinea (Pseudomonas syringae pv. glycinea)).